The following is a 184-amino-acid chain: Crossover junction endodeoxyribonuclease RuvC (184 aa).

Residues D7, E68, and D141 contribute to the active site. 3 residues coordinate Mg(2+): D7, E68, and D141.

It belongs to the RuvC family. As to quaternary structure, homodimer which binds Holliday junction (HJ) DNA. The HJ becomes 2-fold symmetrical on binding to RuvC with unstacked arms; it has a different conformation from HJ DNA in complex with RuvA. In the full resolvosome a probable DNA-RuvA(4)-RuvB(12)-RuvC(2) complex forms which resolves the HJ. It depends on Mg(2+) as a cofactor.

The protein resides in the cytoplasm. The catalysed reaction is Endonucleolytic cleavage at a junction such as a reciprocal single-stranded crossover between two homologous DNA duplexes (Holliday junction).. The RuvA-RuvB-RuvC complex processes Holliday junction (HJ) DNA during genetic recombination and DNA repair. Endonuclease that resolves HJ intermediates. Cleaves cruciform DNA by making single-stranded nicks across the HJ at symmetrical positions within the homologous arms, yielding a 5'-phosphate and a 3'-hydroxyl group; requires a central core of homology in the junction. The consensus cleavage sequence is 5'-(A/T)TT(C/G)-3'. Cleavage occurs on the 3'-side of the TT dinucleotide at the point of strand exchange. HJ branch migration catalyzed by RuvA-RuvB allows RuvC to scan DNA until it finds its consensus sequence, where it cleaves and resolves the cruciform DNA. In Mycobacterium ulcerans (strain Agy99), this protein is Crossover junction endodeoxyribonuclease RuvC.